The chain runs to 197 residues: Nucleoside triphosphate pyrophosphatase (197 aa).

D74 acts as the Proton acceptor in catalysis.

This sequence belongs to the Maf family. A divalent metal cation serves as cofactor.

The protein localises to the cytoplasm. The catalysed reaction is a ribonucleoside 5'-triphosphate + H2O = a ribonucleoside 5'-phosphate + diphosphate + H(+). It carries out the reaction a 2'-deoxyribonucleoside 5'-triphosphate + H2O = a 2'-deoxyribonucleoside 5'-phosphate + diphosphate + H(+). In terms of biological role, nucleoside triphosphate pyrophosphatase. May have a dual role in cell division arrest and in preventing the incorporation of modified nucleotides into cellular nucleic acids. The polypeptide is Nucleoside triphosphate pyrophosphatase (Granulibacter bethesdensis (strain ATCC BAA-1260 / CGDNIH1)).